Consider the following 339-residue polypeptide: HPr kinase/phosphorylase (339 aa).

Residues histidine 153 and lysine 174 contribute to the active site. 168–175 (GKSGLGKS) is a binding site for ATP. Serine 175 contributes to the Mg(2+) binding site. The Proton acceptor; for phosphorylation activity. Proton donor; for dephosphorylation activity role is filled by aspartate 192. The important for the catalytic mechanism of both phosphorylation and dephosphorylation stretch occupies residues 216 to 225 (MEIRGLGVVD). Residue glutamate 217 coordinates Mg(2+). Arginine 258 is an active-site residue. The tract at residues 279 to 284 (PINPGK) is important for the catalytic mechanism of dephosphorylation.

The protein belongs to the HPrK/P family. As to quaternary structure, homohexamer. It depends on Mg(2+) as a cofactor.

It carries out the reaction [HPr protein]-L-serine + ATP = [HPr protein]-O-phospho-L-serine + ADP + H(+). It catalyses the reaction [HPr protein]-O-phospho-L-serine + phosphate + H(+) = [HPr protein]-L-serine + diphosphate. Catalyzes the ATP- as well as the pyrophosphate-dependent phosphorylation of a specific serine residue in HPr, a phosphocarrier protein of the phosphoenolpyruvate-dependent sugar phosphotransferase system (PTS). HprK/P also catalyzes the pyrophosphate-producing, inorganic phosphate-dependent dephosphorylation (phosphorolysis) of seryl-phosphorylated HPr (P-Ser-HPr). The sequence is that of HPr kinase/phosphorylase from Chlorobium phaeobacteroides (strain BS1).